Consider the following 123-residue polypeptide: uncharacterized protein (123 aa).

This is an uncharacterized protein from Acanthamoeba polyphaga mimivirus (APMV).